The following is a 202-amino-acid chain: Glycerol-3-phosphate acyltransferase 1 (202 aa).

A run of 5 helical transmembrane segments spans residues 8 to 28, 85 to 105, 122 to 142, 146 to 166, and 173 to 190; these read AGMI…MSTG, LSLT…IWPL, ILVV…FVLA, QFTL…LIMA, and AGLA…RKNI.

Belongs to the PlsY family. In terms of assembly, probably interacts with PlsX.

The protein localises to the cell membrane. It carries out the reaction an acyl phosphate + sn-glycerol 3-phosphate = a 1-acyl-sn-glycero-3-phosphate + phosphate. It participates in lipid metabolism; phospholipid metabolism. Its function is as follows. Catalyzes the transfer of an acyl group from acyl-phosphate (acyl-PO(4)) to glycerol-3-phosphate (G3P) to form lysophosphatidic acid (LPA). This enzyme utilizes acyl-phosphate as fatty acyl donor, but not acyl-CoA or acyl-ACP. In Desulfitobacterium hafniense (strain Y51), this protein is Glycerol-3-phosphate acyltransferase 1.